The sequence spans 267 residues: Stage 0 sporulation protein A (267 aa).

One can recognise a Response regulatory domain in the interval 5-123; the sequence is KVCVADDNRE…NLVGHIRQVS (119 aa). Residues aspartate 10, aspartate 11, and aspartate 56 each coordinate Ca(2+). 4-aspartylphosphate is present on aspartate 56. The interval 126 to 150 is disordered; that stretch reads ASSVTHRAPSSQSSIIRSSQPEPKK. Positions 135 to 145 are enriched in low complexity; sequence SSQSSIIRSSQ. Residues 199–218 constitute a DNA-binding region (H-T-H motif); it reads PDIAKKFNTTASRVERAIRH.

As to quaternary structure, interacts with small protein YqaH, which is encoded in the skin prophage-like element. Ca(2+) is required as a cofactor. Post-translationally, phosphorylated by KinA and KinB.

Its subcellular location is the cytoplasm. Functionally, may play the central regulatory role in sporulation. It may be an element of the effector pathway responsible for the activation of sporulation genes in response to nutritional stress. Spo0A may act in concert with Spo0H (a sigma factor) to control the expression of some genes that are critical to the sporulation process. Repressor of abrB, activator of the spoIIa operon. Binds the DNA sequence 5'-TGNCGAA-3' (0A box). The chain is Stage 0 sporulation protein A (spo0A) from Bacillus subtilis (strain 168).